The following is a 393-amino-acid chain: Cytochrome b (393 aa).

A run of 4 helical transmembrane segments spans residues 33-53, 77-98, 113-133, and 178-198; these read FGSLLGLCLMIQILTGFFLAM, WFLRNTHANGASILFICMYLHM, WNIGVIMFFLMMTTAFVGYVL, and FFAIHFTLPFITVGLTMLHLL. Heme b is bound by residues histidine 83 and histidine 97. Histidine 182 and histidine 196 together coordinate heme b. Histidine 201 lines the a ubiquinone pocket. A run of 4 helical transmembrane segments spans residues 226-246, 288-308, 320-340, and 347-367; these read YKDVLGFLLLLAALTALALFA, LGGVAALALSILALMVLPFIH, LSQLVFWLFVANIAILTWIGG, and FIIIGRIASVSYFTLILILMP.

This sequence belongs to the cytochrome b family. As to quaternary structure, the cytochrome bc1 complex contains 3 respiratory subunits (MT-CYB, CYC1 and UQCRFS1), 2 core proteins (UQCRC1 and UQCRC2) and probably 6 low-molecular weight proteins. Requires heme b as cofactor.

It is found in the mitochondrion inner membrane. In terms of biological role, component of the ubiquinol-cytochrome c reductase complex (complex III or cytochrome b-c1 complex) that is part of the mitochondrial respiratory chain. The b-c1 complex mediates electron transfer from ubiquinol to cytochrome c. Contributes to the generation of a proton gradient across the mitochondrial membrane that is then used for ATP synthesis. The protein is Cytochrome b (mt-cyb) of Synbranchus marmoratus (Marbled swamp eel).